The sequence spans 352 residues: Coproporphyrin III ferrochelatase (352 aa).

2 residues coordinate Fe-coproporphyrin III: serine 52 and tyrosine 121. Fe(2+)-binding residues include histidine 181 and glutamate 269.

It belongs to the ferrochelatase family.

It is found in the cytoplasm. The enzyme catalyses Fe-coproporphyrin III + 2 H(+) = coproporphyrin III + Fe(2+). It participates in porphyrin-containing compound metabolism; protoheme biosynthesis. Involved in coproporphyrin-dependent heme b biosynthesis. Catalyzes the insertion of ferrous iron into coproporphyrin III to form Fe-coproporphyrin III. This Nocardia farcinica (strain IFM 10152) protein is Coproporphyrin III ferrochelatase.